Consider the following 383-residue polypeptide: Putative glutamate--cysteine ligase 2-1 (383 aa).

It belongs to the glutamate--cysteine ligase type 2 family. YbdK subfamily.

It catalyses the reaction L-cysteine + L-glutamate + ATP = gamma-L-glutamyl-L-cysteine + ADP + phosphate + H(+). In terms of biological role, ATP-dependent carboxylate-amine ligase which exhibits weak glutamate--cysteine ligase activity. The polypeptide is Putative glutamate--cysteine ligase 2-1 (Nocardia farcinica (strain IFM 10152)).